The chain runs to 331 residues: Ribosomal RNA small subunit methyltransferase H (331 aa).

Residues 49–51 (GGH), Asp68, Leu102, Asp116, and Gln123 contribute to the S-adenosyl-L-methionine site.

Belongs to the methyltransferase superfamily. RsmH family.

Its subcellular location is the cytoplasm. It catalyses the reaction cytidine(1402) in 16S rRNA + S-adenosyl-L-methionine = N(4)-methylcytidine(1402) in 16S rRNA + S-adenosyl-L-homocysteine + H(+). Functionally, specifically methylates the N4 position of cytidine in position 1402 (C1402) of 16S rRNA. This chain is Ribosomal RNA small subunit methyltransferase H, found in Renibacterium salmoninarum (strain ATCC 33209 / DSM 20767 / JCM 11484 / NBRC 15589 / NCIMB 2235).